Here is a 423-residue protein sequence, read N- to C-terminus: Serine--tRNA ligase (423 aa).

L-serine is bound at residue T231–E233. Residue R262–E264 coordinates ATP. E285 lines the L-serine pocket. An ATP-binding site is contributed by E349 to S352. S385 serves as a coordination point for L-serine.

It belongs to the class-II aminoacyl-tRNA synthetase family. Type-1 seryl-tRNA synthetase subfamily. In terms of assembly, homodimer. The tRNA molecule binds across the dimer.

It is found in the cytoplasm. The enzyme catalyses tRNA(Ser) + L-serine + ATP = L-seryl-tRNA(Ser) + AMP + diphosphate + H(+). It catalyses the reaction tRNA(Sec) + L-serine + ATP = L-seryl-tRNA(Sec) + AMP + diphosphate + H(+). Its pathway is aminoacyl-tRNA biosynthesis; selenocysteinyl-tRNA(Sec) biosynthesis; L-seryl-tRNA(Sec) from L-serine and tRNA(Sec): step 1/1. In terms of biological role, catalyzes the attachment of serine to tRNA(Ser). Is also able to aminoacylate tRNA(Sec) with serine, to form the misacylated tRNA L-seryl-tRNA(Sec), which will be further converted into selenocysteinyl-tRNA(Sec). This is Serine--tRNA ligase from Coxiella burnetii (strain CbuK_Q154) (Coxiella burnetii (strain Q154)).